The primary structure comprises 992 residues: MSSTTTVAEFAAELNKSPATLIEQLTSAGVAKVQASDPLSESDKQKLLGYLHASHGTVAADRKKITLVKKSTSEIKQADSTGRARIIPVQTIKKRTFIKRDDGSDMPVEEAQPEVLVAPQVQAAADAELVRREDEANRHAELLRRQEAELTEKRRLRDEQAAQEAAREREREAAAQKAQAEAVAQAAAAAQAAALAAEAAKKVKPTIGKIFKPAPVAPTAPAITVEAQKVIDTAAAEKTSKAAEAATAKAAETASLQAAAKAKATAEFQADAAKAVDLQERRRKAEAEAAGIRAMLSAPKRVLVPHVDPKIAMKGTLHKPVVAPGAAKPAVPAAAAPAAPGAAGKKEVKSENLSSTWKDDAAKKKGIPSRGAPVVPGRGNFRAGPRGRRSSGRDVRPESNFVAPTEFKVLEVHVPETITVSELAHKMSIKSSEVIKHLMKLGQMVTINQPLDQDTAMIVVEEMGHTALTAALDDPEAFTADDVQGQQAEALPRAPVVTVMGHVDHGKTSLLDYIRRAKVASGEAGGITQHIGAYHVQTPRGMVSFLDTPGHEAFTAMRARGAQATDIVILVVAADDGVMPQTKEAIKHARAAGVPIVVAINKIDKPGINLERVKGELVTEGVVPEEFGGDSPFVPVSAHTGAGIDDLLEQVLLQAEVLELKASVDSLAKGLVIEARLDKGRGPVATVLVQSGTLKAGDVVLAGSTYGRVRAMLDENGKPIKTAGPSIPVEIQGLTEVPQAGDDFMVMTDERRVREIATYRAGKFRNTKLAKQQASKLENMFSDINAGEVKMLPIIIKADVQGSQEALAQSLLKLSTDEVKVQLVYSGVGGISESDVNLAIASKAVLIGFNTRADAQARKQAENNGIDIRYYNIIYDAVDELKAAMSGMLTPDKKEEIIGNAEIRNIFKVSKIGSIAGCMVTAGVVRRTAKVRLLRGNVVIFTGELDSLKRFKDDAKEVKEGFECGLNLKNYNDIEVGDILEFFEIKEVARTL.

2 disordered regions span residues 154 to 173 (RRLR…EREA) and 338 to 399 (AAPG…RPES). In terms of domain architecture, tr-type G spans 492–661 (PRAPVVTVMG…LLQAEVLELK (170 aa)). The G1 stretch occupies residues 501–508 (GHVDHGKT). A GTP-binding site is contributed by 501 to 508 (GHVDHGKT). The G2 stretch occupies residues 526-530 (GITQH). The segment at 547-550 (DTPG) is G3. Residues 547-551 (DTPGH) and 601-604 (NKID) each bind GTP. A G4 region spans residues 601-604 (NKID). The G5 stretch occupies residues 637 to 639 (SAH).

It belongs to the TRAFAC class translation factor GTPase superfamily. Classic translation factor GTPase family. IF-2 subfamily.

Its subcellular location is the cytoplasm. Functionally, one of the essential components for the initiation of protein synthesis. Protects formylmethionyl-tRNA from spontaneous hydrolysis and promotes its binding to the 30S ribosomal subunits. Also involved in the hydrolysis of GTP during the formation of the 70S ribosomal complex. The polypeptide is Translation initiation factor IF-2 (Polaromonas naphthalenivorans (strain CJ2)).